The chain runs to 346 residues: Phosphoribosylformylglycinamidine cyclo-ligase (346 aa).

Belongs to the AIR synthase family.

The protein resides in the cytoplasm. It carries out the reaction 2-formamido-N(1)-(5-O-phospho-beta-D-ribosyl)acetamidine + ATP = 5-amino-1-(5-phospho-beta-D-ribosyl)imidazole + ADP + phosphate + H(+). It functions in the pathway purine metabolism; IMP biosynthesis via de novo pathway; 5-amino-1-(5-phospho-D-ribosyl)imidazole from N(2)-formyl-N(1)-(5-phospho-D-ribosyl)glycinamide: step 2/2. The protein is Phosphoribosylformylglycinamidine cyclo-ligase of Bacillus velezensis (strain DSM 23117 / BGSC 10A6 / LMG 26770 / FZB42) (Bacillus amyloliquefaciens subsp. plantarum).